We begin with the raw amino-acid sequence, 1191 residues long: Pyruvate-flavodoxin oxidoreductase (1191 aa).

2 4Fe-4S ferredoxin-type domains span residues Gln687–Val716 and Tyr744–Arg773. The [4Fe-4S] cluster site is built by Cys696, Cys699, Cys702, Cys706, Cys753, Cys756, Cys759, Cys763, Cys825, Cys828, Cys853, and Cys1085.

Belongs to the pyruvate:ferredoxin/flavodoxin oxidoreductase family. [4Fe-4S] cluster is required as a cofactor.

The catalysed reaction is oxidized [flavodoxin] + pyruvate + CoA + 2 H(+) = reduced [flavodoxin] + acetyl-CoA + CO2. Oxidoreductase required for the transfer of electrons from pyruvate to flavodoxin, which reduces nitrogenase. This chain is Pyruvate-flavodoxin oxidoreductase (nifJ), found in Rhodospirillum rubrum (strain ATCC 11170 / ATH 1.1.1 / DSM 467 / LMG 4362 / NCIMB 8255 / S1).